The primary structure comprises 430 residues: Asparagine--tRNA ligase (430 aa).

Belongs to the class-II aminoacyl-tRNA synthetase family. In terms of assembly, homodimer.

The protein resides in the cytoplasm. The enzyme catalyses tRNA(Asn) + L-asparagine + ATP = L-asparaginyl-tRNA(Asn) + AMP + diphosphate + H(+). The protein is Asparagine--tRNA ligase of Staphylococcus aureus (strain bovine RF122 / ET3-1).